The following is a 292-amino-acid chain: Ribose import binding protein RbsB (292 aa).

An N-terminal signal peptide occupies residues 1-23; sequence MKKLTALTSAVLLGLAVSSSASA.

Belongs to the bacterial solute-binding protein 2 family. The complex is composed of an ATP-binding protein (RbsA), two transmembrane proteins (RbsC) and a solute-binding protein (RbsB).

The protein resides in the periplasm. Its function is as follows. Part of the ABC transporter complex RbsABC involved in ribose import. Binds ribose. This Haemophilus influenzae (strain ATCC 51907 / DSM 11121 / KW20 / Rd) protein is Ribose import binding protein RbsB (rbsB).